The primary structure comprises 78 residues: Large ribosomal subunit protein bL28 (78 aa).

This sequence belongs to the bacterial ribosomal protein bL28 family.

The chain is Large ribosomal subunit protein bL28 from Pectobacterium atrosepticum (strain SCRI 1043 / ATCC BAA-672) (Erwinia carotovora subsp. atroseptica).